Reading from the N-terminus, the 252-residue chain is Pantothenate synthetase (252 aa).

Position 29–36 (29–36 (MGNLHAGH)) interacts with ATP. His36 serves as the catalytic Proton donor. Gln60 is a binding site for (R)-pantoate. Gln60 is a beta-alanine binding site. 146–149 (GEKD) serves as a coordination point for ATP. Gln152 serves as a coordination point for (R)-pantoate. ATP is bound by residues Val175 and 183-186 (CSSR).

This sequence belongs to the pantothenate synthetase family. In terms of assembly, homodimer.

Its subcellular location is the cytoplasm. It catalyses the reaction (R)-pantoate + beta-alanine + ATP = (R)-pantothenate + AMP + diphosphate + H(+). Its pathway is cofactor biosynthesis; (R)-pantothenate biosynthesis; (R)-pantothenate from (R)-pantoate and beta-alanine: step 1/1. Functionally, catalyzes the condensation of pantoate with beta-alanine in an ATP-dependent reaction via a pantoyl-adenylate intermediate. This Legionella pneumophila (strain Lens) protein is Pantothenate synthetase.